The sequence spans 206 residues: Crossover junction endodeoxyribonuclease RuvC (206 aa).

Active-site residues include Asp7, Glu67, and Asp138. Positions 7, 67, and 138 each coordinate Mg(2+).

It belongs to the RuvC family. As to quaternary structure, homodimer which binds Holliday junction (HJ) DNA. The HJ becomes 2-fold symmetrical on binding to RuvC with unstacked arms; it has a different conformation from HJ DNA in complex with RuvA. In the full resolvosome a probable DNA-RuvA(4)-RuvB(12)-RuvC(2) complex forms which resolves the HJ. Mg(2+) serves as cofactor.

It is found in the cytoplasm. It carries out the reaction Endonucleolytic cleavage at a junction such as a reciprocal single-stranded crossover between two homologous DNA duplexes (Holliday junction).. The RuvA-RuvB-RuvC complex processes Holliday junction (HJ) DNA during genetic recombination and DNA repair. Endonuclease that resolves HJ intermediates. Cleaves cruciform DNA by making single-stranded nicks across the HJ at symmetrical positions within the homologous arms, yielding a 5'-phosphate and a 3'-hydroxyl group; requires a central core of homology in the junction. The consensus cleavage sequence is 5'-(A/T)TT(C/G)-3'. Cleavage occurs on the 3'-side of the TT dinucleotide at the point of strand exchange. HJ branch migration catalyzed by RuvA-RuvB allows RuvC to scan DNA until it finds its consensus sequence, where it cleaves and resolves the cruciform DNA. The protein is Crossover junction endodeoxyribonuclease RuvC of Anaeromyxobacter sp. (strain Fw109-5).